The chain runs to 316 residues: Transcription termination/antitermination protein NusG (316 aa).

The protein belongs to the NusG family.

Participates in transcription elongation, termination and antitermination. The sequence is that of Transcription termination/antitermination protein NusG from Mycoplasma genitalium (strain ATCC 33530 / DSM 19775 / NCTC 10195 / G37) (Mycoplasmoides genitalium).